We begin with the raw amino-acid sequence, 149 residues long: Ribosome maturation factor RimP (149 aa).

This sequence belongs to the RimP family.

The protein localises to the cytoplasm. Required for maturation of 30S ribosomal subunits. The chain is Ribosome maturation factor RimP from Sulfurimonas denitrificans (strain ATCC 33889 / DSM 1251) (Thiomicrospira denitrificans (strain ATCC 33889 / DSM 1251)).